A 137-amino-acid polypeptide reads, in one-letter code: Small ribosomal subunit protein bS16 (137 aa).

It belongs to the bacterial ribosomal protein bS16 family.

This Leuconostoc citreum (strain KM20) protein is Small ribosomal subunit protein bS16.